We begin with the raw amino-acid sequence, 357 residues long: Palmitoyltransferase ZDHHC20-A (357 aa).

The Cytoplasmic segment spans residues 1-14 (MAPSHAVRCCQRGL). The chain crosses the membrane as a helical span at residues 15 to 35 (SWIPVIFINLVVCWSYYAYVV). Over 36–50 (ELCIYTIPNVNEQVI) the chain is Lumenal. The chain crosses the membrane as a helical span at residues 51-71 (YLVVFHAFFFMFMWSYWKTIS). Residues 72–166 (SKPTNPSKEF…NNCVGFSNYK (95 aa)) lie on the Cytoplasmic side of the membrane. The 51-residue stretch at 123 to 173 (RYCDRCQLIKPDRCHHCSTCDKCVLKMDHHCPWVNNCVGFSNYKFFVLFLA) folds into the DHHC domain. Residue Cys-153 is the S-palmitoyl cysteine intermediate of the active site. The chain crosses the membrane as a helical span at residues 167-187 (FFVLFLAYSMLYCVYIAATVL). Residues 188–204 (QYFIKFWTNQLPDTHAK) are Lumenal-facing. A helical membrane pass occupies residues 205-228 (FHVLFLFFVAAMFFISILSLFSYH). Over 229–357 (LWLVGKNRTT…PVCVTLENES (129 aa)) the chain is Cytoplasmic.

Belongs to the DHHC palmitoyltransferase family.

It is found in the golgi apparatus membrane. Its subcellular location is the cell membrane. The protein localises to the cytoplasm. The protein resides in the perinuclear region. It localises to the endoplasmic reticulum membrane. It is found in the endoplasmic reticulum-Golgi intermediate compartment membrane. The catalysed reaction is L-cysteinyl-[protein] + hexadecanoyl-CoA = S-hexadecanoyl-L-cysteinyl-[protein] + CoA. The enzyme catalyses L-cysteinyl-[protein] + tetradecanoyl-CoA = S-tetradecanoyl-L-cysteinyl-[protein] + CoA. It carries out the reaction L-cysteinyl-[protein] + octadecanoyl-CoA = S-octadecanoyl-L-cysteinyl-[protein] + CoA. Palmitoyltransferase that could catalyze the addition of palmitate onto various protein substrates. Catalyzes palmitoylation of Cys residues on protein substrates and has a preference for acyl-CoA with C16 fatty acid chains but may also utilize acyl-CoA with C14 and C18 fatty acid chains. The protein is Palmitoyltransferase ZDHHC20-A of Danio rerio (Zebrafish).